Reading from the N-terminus, the 357-residue chain is Red-sensitive opsin (357 aa).

Residues 1 to 49 (MGDQWGDAVFAARRRGDDTTREAAFTYTNSNNTKDPFEGPNYHIAPRWV) lie on the Extracellular side of the membrane. Asparagine 31 carries N-linked (GlcNAc...) asparagine glycosylation. The chain crosses the membrane as a helical span at residues 50 to 74 (YNLATCWMFFVVVASTVTNGLVLVA). Over 75 to 86 (SAKFKKLRHPLN) the chain is Cytoplasmic. A helical membrane pass occupies residues 87 to 112 (WILVNLAIADLLETLLASTISVCNQF). Residues 113–126 (FGYFILGHPMCVFE) lie on the Extracellular side of the membrane. Residues cysteine 123 and cysteine 200 are joined by a disulfide bond. A helical membrane pass occupies residues 127–146 (GFTVATCGIAGLWSLTVISW). Over 147-165 (ERWVVVCKPFGNVKFDGKM) the chain is Cytoplasmic. A helical transmembrane segment spans residues 166-189 (ATAGIVFTWVWSAVWCAPPIFGWS). The Extracellular portion of the chain corresponds to 190–215 (RYWPHGLKTSCGPDVFSGSEDPGVQS). The helical transmembrane segment at 216-243 (YMIVLMITCCFIPLGIIILCYIAVWWAI) threads the bilayer. Residues 244 to 265 (RTVAQQQKDSESTQKAEKEVSR) are Cytoplasmic-facing. Residues 266–289 (MVVVMIMAYCFCWGPYTFFACFAA) traverse the membrane as a helical segment. Topologically, residues 290-297 (ANPGYAFH) are extracellular. Residues 298 to 322 (PLAAAMPAYFAKSATIYNPVIYVFM) form a helical membrane-spanning segment. N6-(retinylidene)lysine is present on lysine 309. At 323-357 (NRQFRVCIMQLFGKKVDDGSEVSTSKTEVSSVAPA) the chain is on the cytoplasmic side.

It belongs to the G-protein coupled receptor 1 family. Opsin subfamily. Phosphorylated on some or all of the serine and threonine residues present in the C-terminal region. In terms of tissue distribution, the color pigments are found in the cone photoreceptor cells.

It localises to the membrane. Its function is as follows. Visual pigments are the light-absorbing molecules that mediate vision. They consist of an apoprotein, opsin, covalently linked to cis-retinal. The protein is Red-sensitive opsin (R007) of Psalidodon fasciatus (Banded astyanax).